Here is a 363-residue protein sequence, read N- to C-terminus: Tetraacyldisaccharide 4'-kinase (363 aa).

78-85 (TVGGNGKT) lines the ATP pocket.

The protein belongs to the LpxK family.

It catalyses the reaction a lipid A disaccharide + ATP = a lipid IVA + ADP + H(+). The protein operates within glycolipid biosynthesis; lipid IV(A) biosynthesis; lipid IV(A) from (3R)-3-hydroxytetradecanoyl-[acyl-carrier-protein] and UDP-N-acetyl-alpha-D-glucosamine: step 6/6. Its function is as follows. Transfers the gamma-phosphate of ATP to the 4'-position of a tetraacyldisaccharide 1-phosphate intermediate (termed DS-1-P) to form tetraacyldisaccharide 1,4'-bis-phosphate (lipid IVA). In Wigglesworthia glossinidia brevipalpis, this protein is Tetraacyldisaccharide 4'-kinase.